Consider the following 171-residue polypeptide: Phosphinothricin N-acetyltransferase (171 aa).

One can recognise an N-acetyltransferase domain in the interval 7–171; it reads VQVRPGVEED…WDVAWYERPL (165 aa). Acetyl-CoA is bound by residues 94–96, 102–107, and Asn-133; these read VYV and GRGIGS.

The protein belongs to the acetyltransferase family. PAT/BAR subfamily.

It carries out the reaction phosphinothricin + acetyl-CoA = N-acetylphosphinothricin + CoA + H(+). Functionally, inactivates phosphinothricin (PPT) by transfer of an acetyl group from acetyl CoA. The physiological substrate could be a structurally related compound. This chain is Phosphinothricin N-acetyltransferase, found in Streptomyces coelicolor (strain ATCC BAA-471 / A3(2) / M145).